The chain runs to 324 residues: NADH-ubiquinone oxidoreductase chain 1 (324 aa).

9 helical membrane passes run Leu9–Ile29, Pro43–Ile63, Phe77–Leu97, Leu106–Gly126, Ile146–Phe166, Thr177–Ala197, Leu228–Phe248, Gln259–Ile279, and Phe299–Ser319.

The protein belongs to the complex I subunit 1 family.

The protein resides in the mitochondrion inner membrane. It carries out the reaction a ubiquinone + NADH + 5 H(+)(in) = a ubiquinol + NAD(+) + 4 H(+)(out). Its function is as follows. Core subunit of the mitochondrial membrane respiratory chain NADH dehydrogenase (Complex I) that is believed to belong to the minimal assembly required for catalysis. Complex I functions in the transfer of electrons from NADH to the respiratory chain. The immediate electron acceptor for the enzyme is believed to be ubiquinone. This chain is NADH-ubiquinone oxidoreductase chain 1 (MT-ND1), found in Scyliorhinus canicula (Small-spotted catshark).